We begin with the raw amino-acid sequence, 395 residues long: Phosphoglycerate kinase (395 aa).

Substrate is bound by residues 20–22 (DLN), R35, 58–61 (HFGR), R117, and R150. ATP is bound by residues K200, E322, and 352 to 355 (GGDT).

This sequence belongs to the phosphoglycerate kinase family. As to quaternary structure, monomer.

The protein localises to the cytoplasm. The catalysed reaction is (2R)-3-phosphoglycerate + ATP = (2R)-3-phospho-glyceroyl phosphate + ADP. It functions in the pathway carbohydrate degradation; glycolysis; pyruvate from D-glyceraldehyde 3-phosphate: step 2/5. This chain is Phosphoglycerate kinase, found in Brucella suis biovar 1 (strain 1330).